The following is a 114-amino-acid chain: Protein ORF3 (114 aa).

2 hydrophobic regions span residues Trp6 to Arg24 and Ala33 to Leu53. Residues Val28–Pro68 are interaction with host HPX. The interval Val48–Pro72 is interaction with the capsid protein. Ser71 bears the Phosphoserine; by host mark. The interval Pro72–Arg114 is homodimerization, and interaction with host AMBP/bikunin. Residues Ser85 to Arg114 form a disordered region. The interval Arg95 to Val104 is interaction with host SRC, HCK, FYN, PIK3R3 and GRB2. The PTAP/PSAP motif signature appears at Pro96–Pro99.

It belongs to the hepevirus ORF3 protein family. Forms homooligomers. Interacts with host SRC, HCK, FYN, PIK3R3 and GRB2 (via SH3 domain); binding does not activate the kinases. Interacts with host AMBP/bikunin and AMBP/alpha-1-microglobulin peptides. Interacts with host HPX/hemopexin. Interacts (when phosphorylated) with capsid protein ORF2. Interacts with host TSG101; this interaction plays a role in viral release from the host cell. Interacts with host SIRPA; this interaction down-regulates the phosphorylation of host IRF3. Post-translationally, palmitoylated in the N-terminus.

It localises to the host endoplasmic reticulum membrane. The protein resides in the host cytoplasm. It is found in the host cytoskeleton. Its subcellular location is the virion. The protein localises to the host cell membrane. Its function is as follows. Small multifunctional phosphoprotein involved in virion morphogenesis, egress and counteracting host innate immunity. Plays critical roles in the final steps of viral release by interacting with host TSG101, a member of the vacuolar protein-sorting pathway and using other cellular host proteins involved in vesicle formation pathway. Also acts as a viroporin and forms ion conductive pores allowing viral particle release. Impairs the generation of type I interferon by down-regulating host TLR3 and TLR7 as well as their downstream signaling pathways. Down-regulates the phosphorylation of host IRF3 via the interaction with host SIRP-alpha, thereby inhibiting IFN-I expression. Interacts with host microtubules. This is Protein ORF3 from Hepatitis E virus genotype 1 (isolate Human/India/Hyderabad) (HEV-1).